Here is a 1243-residue protein sequence, read N- to C-terminus: Interphotoreceptor matrix proteoglycan 2 (1243 aa).

The signal sequence occupies residues 1–27 (MIMFLPVGRMSLGILILFLTGGNLVSA). Over 28-1106 (SEERQEPMHA…EFVSEPFVIG (1079 aa)) the chain is Extracellular. A disordered region spans residues 205–234 (GLASESSAASPQESISNEIENVTEEPTQPA). The span at 207–220 (ASESSAASPQESIS) shows a compositional bias: low complexity. Residues 221-230 (NEIENVTEEP) are compositionally biased toward polar residues. An N-linked (GlcNAc...) asparagine glycan is attached at Asn225. Positions 235–349 (AEQIAEFSIQ…KPTAVYTISN (115 aa)) constitute an SEA 1 domain. Positions 255 to 263 (RDPSSALYR) are hyaluronan-binding motif involved in chondroitin sulfate A-binding. N-linked (GlcNAc...) asparagine glycosylation is found at Asn297, Asn316, and Asn366. Thr427, Thr428, and Thr429 each carry an O-linked (GalNAc...) threonine glycan. A glycan (N-linked (GlcNAc...) asparagine) is linked at Asn582. Thr701, Thr704, and Thr712 each carry an O-linked (GalNAc...) threonine glycan. Residues 748–762 (EDMVHTESSSHKELD) show a composition bias toward basic and acidic residues. The segment at 748 to 768 (EDMVHTESSSHKELDSEVPVS) is disordered. O-linked (GalNAc...) threonine glycosylation is found at Thr817 and Thr888. Residues 900 to 1013 (GALVVFFSLR…YSLDVESGDE (114 aa)) form the SEA 2 domain. N-linked (GlcNAc...) asparagine glycans are attached at residues Asn945 and Asn959. 2 consecutive EGF-like domains span residues 1013 to 1054 (EANP…LPCQ) and 1055 to 1096 (SLCD…QHCE). 6 disulfide bridges follow: Cys1017–Cys1028, Cys1022–Cys1039, Cys1041–Cys1053, Cys1057–Cys1070, Cys1064–Cys1080, and Cys1082–Cys1095. The tract at residues 1083–1091 (RVGSNWWYR) is hyaluronan-binding motif involved in chondroitin sulfate C-binding. Residues 1107–1127 (ITIASVVSFLLVASAVVFFLV) form a helical membrane-spanning segment. Residues 1128–1136 (KMLQAQNVR) form a hyaluronan-binding motif involved in chondroitin sulfate A- and C-binding region. Residues 1128-1243 (KMLQAQNVRR…FVREHQMEEL (116 aa)) lie on the Cytoplasmic side of the membrane. Residues 1139 to 1147 (RQRPTSSSR) form a hyaluronan-binding motif involved in chondroitin sulfate C-binding region. Residues 1212-1220 (KEEIQERMR) are hyaluronan-binding motif involved in chondroitin sulfate A- and C-binding motif.

Expressed in the retina (at protein level). Expressed in the pineal gland.

It is found in the photoreceptor outer segment membrane. The protein localises to the photoreceptor inner segment membrane. It localises to the secreted. The protein resides in the extracellular space. Its subcellular location is the extracellular matrix. It is found in the interphotoreceptor matrix. Chondroitin sulfate- and hyaluronan-binding proteoglycan involved in the organization of interphotoreceptor matrix; may participate in the maturation and maintenance of the light-sensitive photoreceptor outer segment. Binds heparin. The polypeptide is Interphotoreceptor matrix proteoglycan 2 (Impg2) (Mus musculus (Mouse)).